The primary structure comprises 305 residues: DNA-directed RNA polymerase 35 kDa subunit (305 aa).

The protein belongs to the poxviridae DNA-directed RNA polymerase 35 kDa subunit family. In terms of assembly, the DNA-dependent RNA polymerase used for intermediate and late genes expression consists of eight subunits 147 kDa, 133 kDa, 35 kDa, 30 kDa, 22 kDa, 19 kDa, 18 kDa and 7 kDa totalling more than 500 kDa in mass. The same holoenzyme, with the addition of the transcription-specificity factor RAP94, is used for early gene expression.

It localises to the virion. The catalysed reaction is RNA(n) + a ribonucleoside 5'-triphosphate = RNA(n+1) + diphosphate. Part of the DNA-dependent RNA polymerase which catalyzes the transcription of viral DNA into RNA using the four ribonucleoside triphosphates as substrates. Responsible for the transcription of early, intermediate and late genes. DNA-dependent RNA polymerase associates with the early transcription factor (ETF), itself composed of D6 and A7, thereby allowing the early genes transcription. Late transcription, and probably also intermediate transcription, require newly synthesized RNA polymerase. In Homo sapiens (Human), this protein is DNA-directed RNA polymerase 35 kDa subunit (OPG156).